Reading from the N-terminus, the 225-residue chain is Vacuolar protein sorting-associated protein 2 homolog 1 (225 aa).

The stretch at 13–54 (AELLRENKRMLDKSIREIERERQGLQTQEKKLINEIKKTAKQ) forms a coiled coil.

It belongs to the SNF7 family. As to quaternary structure, component of the endosomal sorting required for transport complex III (ESCRT-III), composed at least of VPS2, VPS20, VPS24 and VPS32. Interacts with SKD1.

The protein resides in the endosome. Functionally, component of the ESCRT-III complex, which is required for multivesicular bodies (MVBs) formation and sorting of endosomal cargo proteins into MVBs. The ESCRT-III complex is probably involved in the concentration of MVB cargo. This Arabidopsis thaliana (Mouse-ear cress) protein is Vacuolar protein sorting-associated protein 2 homolog 1 (VPS2.1).